Here is a 1218-residue protein sequence, read N- to C-terminus: Protein jagged-1 (1218 aa).

Residues Met-1–Gly-33 form the signal peptide. Residues Gln-34 to Asp-1067 lie on the Extracellular side of the membrane. An N-linked (GlcNAc...) asparagine glycan is attached at Asn-143. The 45-residue stretch at Val-185–Cys-229 folds into the DSL domain. Disulfide bonds link Cys-187–Cys-196 and Cys-200–Cys-212. The tract at residues Phe-199–Phe-207 is important for interaction with NOTCH1. Asn-217 is a glycosylation site (N-linked (GlcNAc...) asparagine). 40 disulfides stabilise this stretch: Cys-220/Cys-229, Cys-234/Cys-245, Cys-238/Cys-251, Cys-253/Cys-262, Cys-265/Cys-276, Cys-271/Cys-282, Cys-284/Cys-293, Cys-300/Cys-312, Cys-306/Cys-322, Cys-324/Cys-333, Cys-340/Cys-351, Cys-345/Cys-360, Cys-362/Cys-371, Cys-378/Cys-389, Cys-383/Cys-398, Cys-400/Cys-409, Cys-416/Cys-427, Cys-421/Cys-436, Cys-438/Cys-447, Cys-454/Cys-464, Cys-458/Cys-473, Cys-475/Cys-484, Cys-491/Cys-502, Cys-496/Cys-511, Cys-513/Cys-522, Cys-529/Cys-540, Cys-534/Cys-549, Cys-551/Cys-560, Cys-578/Cys-605, Cys-599/Cys-615, Cys-617/Cys-626, Cys-633/Cys-644, Cys-638/Cys-653, Cys-655/Cys-664, Cys-671/Cys-682, Cys-676/Cys-691, Cys-693/Cys-702, Cys-709/Cys-720, Cys-714/Cys-729, and Cys-731/Cys-740. The EGF-like 1 domain occupies Asn-230–Asp-263. In terms of domain architecture, EGF-like 2; atypical spans Lys-264–Asp-294. 2 EGF-like domains span residues Asp-296 to Glu-334 and Ala-336 to Ser-372. Positions Asn-374–Gln-410 constitute an EGF-like 5; calcium-binding domain. Asn-382 is a glycosylation site (N-linked (GlcNAc...) asparagine). The 37-residue stretch at Asp-412–Asp-448 folds into the EGF-like 6; calcium-binding domain. An EGF-like 7; calcium-binding domain is found at Asn-450–Glu-485. In terms of domain architecture, EGF-like 8; calcium-binding spans Asp-487–Gln-523. 2 consecutive EGF-like domains span residues Asp-525–Ser-561 and Asp-586–His-627. The N-linked (GlcNAc...) asparagine glycan is linked to Asn-559. The EGF-like 11; calcium-binding domain maps to Asn-629 to Glu-665. One can recognise an EGF-like 12; calcium-binding domain in the interval Asn-667–His-703. EGF-like domains follow at residues Arg-705–Asn-741 and Arg-744–Thr-780. A glycan (N-linked (GlcNAc...) asparagine) is linked at Asn-745. Cystine bridges form between Cys-748–Cys-759, Cys-753–Cys-768, Cys-770–Cys-779, Cys-786–Cys-797, Cys-791–Cys-806, Cys-808–Cys-817, Cys-824–Cys-835, Cys-829–Cys-844, and Cys-846–Cys-855. An EGF-like 15; calcium-binding domain is found at Asn-782–Arg-818. An EGF-like 16; calcium-binding domain is found at Asn-820 to His-856. 4 N-linked (GlcNAc...) asparagine glycosylation sites follow: Asn-960, Asn-991, Asn-1045, and Asn-1064. A helical membrane pass occupies residues Phe-1068–Val-1093. Residues Arg-1094–Val-1218 lie on the Cytoplasmic side of the membrane. The segment at Arg-1181 to Val-1218 is disordered. The segment covering Gly-1188–Lys-1199 has biased composition (polar residues).

In terms of assembly, interacts with NOTCH1, NOTCH2 and NOTCH3. In terms of tissue distribution, widely expressed in many tissues, with highest expression in brain, heart, muscle and thymus.

It localises to the membrane. Its subcellular location is the cell membrane. In terms of biological role, ligand for multiple Notch receptors and involved in the mediation of Notch signaling. May be involved in cell-fate decisions during hematopoiesis. Seems to be involved in early and late stages of mammalian cardiovascular development. Inhibits myoblast differentiation. May regulate fibroblast growth factor-induced angiogenesis. In Mus musculus (Mouse), this protein is Protein jagged-1 (Jag1).